The chain runs to 264 residues: uncharacterized protein (264 aa).

Residues 1–16 form the signal peptide; the sequence is MKGKSALTLLLAGIFS. Residue Cys17 is the site of N-palmitoyl cysteine attachment. Cys17 carries S-diacylglycerol cysteine lipidation.

The protein resides in the cell inner membrane. This is an uncharacterized protein from Escherichia coli (strain K12).